A 630-amino-acid chain; its full sequence is Plastin-3 (630 aa).

EF-hand domains follow at residues 12-47 (DELD…ANMP) and 52-87 (KVRE…VKSS). Residues Asp25, Asn27, Asn29, Glu36, Asp65, Asn67, Asp69, Lys71, and Glu76 each contribute to the Ca(2+) site. Actin-binding stretches follow at residues 109-382 (TSEL…ALTK) and 383-627 (PENQ…GRGM). 2 consecutive Calponin-homology (CH) domains span residues 123–239 (EEEK…KIGL) and 267–378 (LSPE…NKYP). Ser268, Ser293, Ser326, and Ser339 each carry phosphoserine. Phosphothreonine is present on Thr391. Calponin-homology (CH) domains lie at 397-506 (TREE…RRYT) and 518-627 (KAND…GRGM).

Monomer. Expressed in a variety of organs, including muscle, brain, uterus and esophagus.

It is found in the cytoplasm. Functionally, actin-bundling protein. This chain is Plastin-3 (PLS3), found in Homo sapiens (Human).